The following is a 202-amino-acid chain: Glycerol-3-phosphate acyltransferase (202 aa).

The next 4 helical transmembrane spans lie at 2-22, 80-100, 119-139, and 158-178; these read ANLLFALAAYLIGSVSFAVVV, LNETGLAMVALAVFLGHLFPV, AIDPILGLGTLATWLIIAFFF, and VLMNGVDVMTGAIFVISVLLI.

This sequence belongs to the PlsY family. In terms of assembly, probably interacts with PlsX.

The protein resides in the cell inner membrane. The enzyme catalyses an acyl phosphate + sn-glycerol 3-phosphate = a 1-acyl-sn-glycero-3-phosphate + phosphate. It participates in lipid metabolism; phospholipid metabolism. Functionally, catalyzes the transfer of an acyl group from acyl-phosphate (acyl-PO(4)) to glycerol-3-phosphate (G3P) to form lysophosphatidic acid (LPA). This enzyme utilizes acyl-phosphate as fatty acyl donor, but not acyl-CoA or acyl-ACP. The sequence is that of Glycerol-3-phosphate acyltransferase from Cupriavidus necator (strain ATCC 17699 / DSM 428 / KCTC 22496 / NCIMB 10442 / H16 / Stanier 337) (Ralstonia eutropha).